Reading from the N-terminus, the 128-residue chain is MNVYIPILVLAALAAAFAVVSVVIASLVGPSRFNRSKQAAYECGIEPASTGARTSIGPGAASGQRFPIKYYLTAMLFIVFDIEIVFLYPWAVSYDSLGTFALVEMAIFMLTVFVAYAYVWRRGGLTWD.

A run of 3 helical transmembrane segments spans residues 5 to 25 (IPIL…VVIA), 72 to 92 (LTAM…PWAV), and 100 to 120 (FALV…AYVW).

Belongs to the complex I subunit 3 family. In terms of assembly, NDH-1 is composed of 14 different subunits. Subunits NuoA, H, J, K, L, M, N constitute the membrane sector of the complex.

The protein resides in the cell membrane. The enzyme catalyses a quinone + NADH + 5 H(+)(in) = a quinol + NAD(+) + 4 H(+)(out). In terms of biological role, NDH-1 shuttles electrons from NADH, via FMN and iron-sulfur (Fe-S) centers, to quinones in the respiratory chain. The immediate electron acceptor for the enzyme in this species is believed to be a menaquinone. Couples the redox reaction to proton translocation (for every two electrons transferred, four hydrogen ions are translocated across the cytoplasmic membrane), and thus conserves the redox energy in a proton gradient. The polypeptide is NADH-quinone oxidoreductase subunit A (Mycobacterium bovis (strain ATCC BAA-935 / AF2122/97)).